The following is an 801-amino-acid chain: MLVSYKWLKELVDIDVPSQELAEKMSTTGIEVEGVESPAAGLSKIVVGEVLSCEDVPETHLHVCQINVGEEEERQIVCGAPNVRAGIKVMVALPGARIADNYKIKKGKIRGLESLGMICSLGELGISDSVVPKEFADGIQILPEDAVPGEEVFSYLDLDDEIIELSITPNRADALSMCGVAHEVAAIYDKAVNFKKFTLTETNEAAADALSVSIETDKAPYYAARILDNVTIAPSPQWLQNLLMNEGIRPINNVVDVTNYILLYFGQPMHAFDLDTFEGTDIRVREARDGEKLVTLDGEERDLAETDLVITVADKPVALAGVMGGQATEISEKSSRVILEAAVFNGKSIRKTSGRLNLRSESSSRFEKGINVATVNEALDAAASMIAELAGATVRKGIVSAGELDTSDVEVSSTLADVNRVLGTELSYADVEDVFRRLGFGLSGNADSFTVSVPRRRWDITIEADLFEEIARIYGYDRLPTSLPKDDGTAGELTVIQKLRRQVRTIAEGAGLTEIITYALTTPEKAVEFTAQPSNLTELMWPMTVDRSVLRQNMISGILDTVAYNVARKNKNLALYEIGKVFEQTGNPKEELPNEINSFAFALTGLVAEKDFQTAAVPVDFFYAKGILEALFTRLGLQVTYTATSEIVSLHPGRTAVISLGDQVLGFLGQVHPVTAKAYDIPETYVAELNLSAIEGALQPAVPFVEITKFPAVSRDVALLLKAEVTHQEVVDAIQAAGVKRLTDIKLFDVFSGEKLGLGMKSMAYSLTFQNPEDSLTDEEVARYMEKIQASLEEKVNAEVR.

One can recognise a tRNA-binding domain in the interval Ala39–Phe153. The B5 domain maps to Thr406 to Thr481. The Mg(2+) site is built by Asp459, Asp465, Glu468, and Glu469. In terms of domain architecture, FDX-ACB spans Thr708–Arg801.

This sequence belongs to the phenylalanyl-tRNA synthetase beta subunit family. Type 1 subfamily. In terms of assembly, tetramer of two alpha and two beta subunits. Mg(2+) is required as a cofactor.

Its subcellular location is the cytoplasm. It catalyses the reaction tRNA(Phe) + L-phenylalanine + ATP = L-phenylalanyl-tRNA(Phe) + AMP + diphosphate + H(+). This Streptococcus pneumoniae serotype 4 (strain ATCC BAA-334 / TIGR4) protein is Phenylalanine--tRNA ligase beta subunit.